The sequence spans 213 residues: Phosphoheptose isomerase (213 aa).

The 159-residue stretch at 50 to 208 (MAETFEGGGR…IDLVERMLGY (159 aa)) folds into the SIS domain. 65-67 (NGG) lines the substrate pocket. Zn(2+) is bound by residues H74 and E78. Residues E78, 109-110 (ND), 135-137 (STS), S140, and Q188 each bind substrate. The Zn(2+) site is built by Q188 and H196.

This sequence belongs to the SIS family. GmhA subfamily. It depends on Zn(2+) as a cofactor.

It localises to the cytoplasm. The enzyme catalyses 2 D-sedoheptulose 7-phosphate = D-glycero-alpha-D-manno-heptose 7-phosphate + D-glycero-beta-D-manno-heptose 7-phosphate. The protein operates within carbohydrate biosynthesis; D-glycero-D-manno-heptose 7-phosphate biosynthesis; D-glycero-alpha-D-manno-heptose 7-phosphate and D-glycero-beta-D-manno-heptose 7-phosphate from sedoheptulose 7-phosphate: step 1/1. In terms of biological role, catalyzes the isomerization of sedoheptulose 7-phosphate in D-glycero-D-manno-heptose 7-phosphate. The polypeptide is Phosphoheptose isomerase (Chlorobium phaeovibrioides (strain DSM 265 / 1930) (Prosthecochloris vibrioformis (strain DSM 265))).